We begin with the raw amino-acid sequence, 138 residues long: Large ribosomal subunit protein uL16 (138 aa).

Residues 1 to 16 (MLIPKRVKFRRQHRPN) show a composition bias toward basic residues. Residues 1–25 (MLIPKRVKFRRQHRPNRSGMSKGGN) form a disordered region.

This sequence belongs to the universal ribosomal protein uL16 family. In terms of assembly, part of the 50S ribosomal subunit.

In terms of biological role, binds 23S rRNA and is also seen to make contacts with the A and possibly P site tRNAs. This is Large ribosomal subunit protein uL16 from Corynebacterium urealyticum (strain ATCC 43042 / DSM 7109).